The chain runs to 126 residues: 3-aminoacrylate deaminase RutC (126 aa).

This sequence belongs to the RutC family.

The catalysed reaction is (Z)-3-aminoacrylate + H2O + H(+) = 3-oxopropanoate + NH4(+). Its function is as follows. Involved in pyrimidine catabolism. Catalyzes the deamination of 3-aminoacrylate to malonic semialdehyde, a reaction that can also occur spontaneously. RutC may facilitate the reaction and modulate the metabolic fitness, rather than catalyzing essential functions. In Acinetobacter baylyi (strain ATCC 33305 / BD413 / ADP1), this protein is 3-aminoacrylate deaminase RutC.